The sequence spans 125 residues: Small ribosomal subunit protein uS13 (125 aa).

Positions 92 to 125 are disordered; sequence RRSLPVRGQNTQTNARTRKGKRKTVAGKKKAARK. The span at 107–125 shows a compositional bias: basic residues; sequence RTRKGKRKTVAGKKKAARK.

Belongs to the universal ribosomal protein uS13 family. In terms of assembly, part of the 30S ribosomal subunit. Forms a loose heterodimer with protein S19. Forms two bridges to the 50S subunit in the 70S ribosome.

Its function is as follows. Located at the top of the head of the 30S subunit, it contacts several helices of the 16S rRNA. In the 70S ribosome it contacts the 23S rRNA (bridge B1a) and protein L5 of the 50S subunit (bridge B1b), connecting the 2 subunits; these bridges are implicated in subunit movement. Contacts the tRNAs in the A and P-sites. The chain is Small ribosomal subunit protein uS13 from Chlorobium luteolum (strain DSM 273 / BCRC 81028 / 2530) (Pelodictyon luteolum).